The chain runs to 166 residues: Large ribosomal subunit protein uL10 (166 aa).

Belongs to the universal ribosomal protein uL10 family. Part of the ribosomal stalk of the 50S ribosomal subunit. The N-terminus interacts with L11 and the large rRNA to form the base of the stalk. The C-terminus forms an elongated spine to which L12 dimers bind in a sequential fashion forming a multimeric L10(L12)X complex.

Forms part of the ribosomal stalk, playing a central role in the interaction of the ribosome with GTP-bound translation factors. The chain is Large ribosomal subunit protein uL10 from Aeromonas hydrophila subsp. hydrophila (strain ATCC 7966 / DSM 30187 / BCRC 13018 / CCUG 14551 / JCM 1027 / KCTC 2358 / NCIMB 9240 / NCTC 8049).